A 1170-amino-acid polypeptide reads, in one-letter code: Thrombospondin-2 (1170 aa).

An N-terminal signal peptide occupies residues 1–18 (MLWPLLLLALWAWPSAQA). Positions 19–215 (GDQDEDTAFD…LQNVYLVFEN (197 aa)) constitute a Laminin G-like domain. The interval 19 to 232 (GDQDEDTAFD…KKGCQQSQGA (214 aa)) is heparin-binding. Residues asparagine 151, asparagine 316, and asparagine 330 are each glycosylated (N-linked (GlcNAc...) asparagine). The VWFC domain maps to 318–375 (SACWQDGRFFAENETWVVDSCTKCTCKKFKTVCHQISCPPATCADPWFVEGECCPSCV). TSP type-1 domains follow at residues 379-429 (EEGW…GRCD), 435-490 (DGGW…PPCP), and 492-547 (DGRW…KSCP). Disulfide bonds link cysteine 391–cysteine 423, cysteine 395–cysteine 428, cysteine 406–cysteine 413, cysteine 447–cysteine 484, cysteine 451–cysteine 489, cysteine 462–cysteine 474, cysteine 504–cysteine 541, cysteine 508–cysteine 546, cysteine 519–cysteine 531, cysteine 551–cysteine 562, cysteine 556–cysteine 572, cysteine 575–cysteine 586, cysteine 592–cysteine 608, cysteine 599–cysteine 617, cysteine 620–cysteine 644, cysteine 650–cysteine 663, cysteine 657–cysteine 676, cysteine 678–cysteine 689, cysteine 705–cysteine 713, cysteine 718–cysteine 738, cysteine 754–cysteine 774, cysteine 777–cysteine 797, cysteine 813–cysteine 833, cysteine 836–cysteine 856, cysteine 874–cysteine 894, and cysteine 910–cysteine 930. A glycan (N-linked (GlcNAc...) asparagine) is linked at asparagine 455. In terms of domain architecture, EGF-like 1 spans 547-587 (PIDGCLSNPCFPGAECSSFPDGSWSCGSCPGGFLGNGTHCE). N-linked (GlcNAc...) asparagine glycosylation is present at asparagine 582. An EGF-like 2 domain is found at 646-690 (PENPCKDKTHSCHRHAECIYLGHFSDPMYKCECQTGYAGDGLICG). 8 TSP type-3 repeats span residues 691-726 (EDSD…NSGQ), 727-762 (EDFD…NPRQ), 763-785 (FDYD…NPAQ), 786-821 (IDTD…NTDQ), 822-844 (RDTD…NPDQ), 845-882 (TDVD…NANQ), 883-918 (ADHD…NPDQ), and 919-954 (EDSD…AISE). Asparagine 708 carries N-linked (GlcNAc...) asparagine glycosylation. The tract at residues 731–750 (KDGIGDACDDDDDNDGVSDE) is disordered. Residues 737–747 (ACDDDDDNDGV) are compositionally biased toward acidic residues. The segment at 841–944 (NPDQTDVDND…DNDSIPDIDD (104 aa)) is disordered. Composition is skewed to acidic residues over residues 845–864 (TDVD…DIDE) and 894–903 (CDSDDDNDGI). The span at 923-933 (GDRRGDACKDD) shows a compositional bias: basic and acidic residues. Residues 926 to 928 (RGD) carry the Cell attachment site motif. The segment covering 934–944 (FDNDSIPDIDD) has biased composition (acidic residues). 2 N-linked (GlcNAc...) asparagine glycosylation sites follow: asparagine 936 and asparagine 1067. The cysteines at positions 946 and 1167 are disulfide-linked. The 213-residue stretch at 958 to 1170 (RNFQMVHLDP…SDLKYECRDV (213 aa)) folds into the TSP C-terminal domain.

Belongs to the thrombospondin family. Homotrimer; disulfide-linked. Can bind to fibrinogen, fibronectin, laminin and type V collagen. Interacts (via the TSP type I repeats) with CD36; the interaction conveys an antiangiogenic effect. Interacts (via the TSP type I repeats) with HRG; the interaction blocks the antiangiogenic effect of THBS2 with CD36.

Functionally, adhesive glycoprotein that mediates cell-to-cell and cell-to-matrix interactions. Ligand for CD36 mediating antiangiogenic properties. This Bos taurus (Bovine) protein is Thrombospondin-2 (THBS2).